The sequence spans 434 residues: Protein FAM83A (434 aa).

The interval 1-298 is DUF1669; the sequence is MSRSRHLGKI…LYASSKPVMG (298 aa). The segment at 76–97 is disordered; the sequence is REPPCPPDTLGGAEAGPKGLDS. 4 positions are modified to phosphoserine: Ser-301, Ser-327, Ser-348, and Ser-357. The segment at 308–399 is disordered; the sequence is VPPGAAPANG…HDGPPAAVYS (92 aa). Composition is skewed to low complexity over residues 320–332 and 348–357; these read SSSSGSASDRTSS and SVSASSGPCS. A compositionally biased stretch (pro residues) spans 358–369; it reads PAAPHPPPPPRF.

This sequence belongs to the FAM83 family. In terms of assembly, directly interacts (via DUF1669) with casein kinase isoforms CSNK1A1, CSNK1A1L, CSNK1D and CSNK1E. Phosphorylated upon EGFR activation in a breast cancer cell line.

Its subcellular location is the cytoplasm. Its function is as follows. Involved in mitochondrial maintenance during adipogenesis. May be acting by playing a role in the maintenance of normal mitochondrial function. This chain is Protein FAM83A, found in Homo sapiens (Human).